The chain runs to 131 residues: Olfactory receptor-like protein COR9 (131 aa).

Residues 1 to 16 lie on the Cytoplasmic side of the membrane; that stretch reads VAICSPLLYSTVMTKR. A helical membrane pass occupies residues 17–41; that stretch reads VCMQLVVGSYMGGLLNSLTHTCGLL. The Extracellular portion of the chain corresponds to 42-82; it reads GLPFCGPNVINHYFCDIPPLLQLACSDTHRNETLLLAFSAV. Residue asparagine 72 is glycosylated (N-linked (GlcNAc...) asparagine). A helical transmembrane segment spans residues 83–103; that stretch reads IALFTLFVITASYMLILSVIL. The Cytoplasmic portion of the chain corresponds to 104-116; that stretch reads KIQSDDGRKKTFH. Residues 117-131 traverse the membrane as a helical segment; the sequence is TCASHLTAITIFFGS.

The protein belongs to the G-protein coupled receptor 1 family.

The protein resides in the cell membrane. Its function is as follows. Odorant receptor. The protein is Olfactory receptor-like protein COR9 (COR9) of Gallus gallus (Chicken).